Reading from the N-terminus, the 616-residue chain is Alpha terpineol synthase, chloroplastic (616 aa).

Residues methionine 1–methionine 41 constitute a chloroplast transit peptide. Residues aspartate 367, aspartate 371, and aspartate 519 each coordinate Mg(2+). Positions aspartate 367–aspartate 371 match the DDXXD motif motif.

It belongs to the terpene synthase family. Tpsd subfamily. Mg(2+) serves as cofactor. It depends on Mn(2+) as a cofactor.

Its subcellular location is the plastid. The protein localises to the chloroplast. The catalysed reaction is (2E)-geranyl diphosphate + H2O = (S)-alpha-terpineol + diphosphate. It carries out the reaction (2E)-geranyl diphosphate + H2O = 1,8-cineole + diphosphate. It catalyses the reaction (2E)-geranyl diphosphate = beta-myrcene + diphosphate. The enzyme catalyses (2E)-geranyl diphosphate = (1S,5S)-sabinene + diphosphate. The protein operates within terpene metabolism; oleoresin biosynthesis. It participates in secondary metabolite biosynthesis; terpenoid biosynthesis. Its function is as follows. Monoterpene synthase (TPS) involved in the biosynthesis of monoterpene natural products included in conifer oleoresin secretions and volatile emissions; these compounds contribute to biotic and abiotic stress defense against herbivores and pathogens. Catalyzes the conversion of (2E)-geranyl diphosphate (GPP) to alpha-terpineol and, to a lower extent, to 1,8-cineole, myrcene and (-)-sabinene. The chain is Alpha terpineol synthase, chloroplastic from Pinus contorta (Shore pine).